Reading from the N-terminus, the 534-residue chain is Origin of replication complex subunit 5 (534 aa).

A disordered region spans residues 1-36 (MPPKEESSKVTRRSTRSSASVTVENSEPIESHTPTI). 83–90 (GGASTGKT) lines the ATP pocket. The Nuclear localization signal motif lies at 129 to 136 (HRKCSLNG). The interval 397 to 428 (MFDSTGGMDNRKRKRKASEKSMEKKEIAEQEA) is disordered. The span at 414–424 (SEKSMEKKEIA) shows a compositional bias: basic and acidic residues.

The protein belongs to the ORC5 family. As to quaternary structure, component of the origin recognition complex (ORC) composed of at least ORC1 (ORC1A or ORC1B), ORC2, ORC3, ORC4, ORC5 and ORC6. ORC is regulated in a cell-cycle and development dependent manner. It is sequentially assembled at the exit from anaphase of mitosis and disassembled as cells enter S phase. Interacts directly with ORC1A, ORC1B, ORC2, ORC3, ORC4 and ORC6. As to expression, follow a cell-cycle regulation with a peak at the G1/S-phase. Mostly expressed in flower buds and cauline leaves, and, to a lower exent, in roots, leaves and stems. Expressed at low levels ubiquitously.

Its subcellular location is the nucleus. Component of the origin recognition complex (ORC) that binds origins of replication. DNA-binding is ATP-dependent. The specific DNA sequences that define origins of replication have not been identified yet. ORC is required to assemble the pre-replication complex necessary to initiate DNA replication. The protein is Origin of replication complex subunit 5 of Arabidopsis thaliana (Mouse-ear cress).